Reading from the N-terminus, the 372-residue chain is Maltose/maltodextrin import ATP-binding protein MalK (372 aa).

The ABC transporter domain maps to 4–234 (VSLRNVGKSY…PANRFVAGFI (231 aa)). 36–43 (GPSGCGKS) provides a ligand contact to ATP.

The protein belongs to the ABC transporter superfamily. Maltooligosaccharide importer (TC 3.A.1.1.1) family. In terms of assembly, the complex is composed of two ATP-binding proteins (MalK), two transmembrane proteins (MalG and MalK) and a solute-binding protein (MalE).

The protein resides in the cell inner membrane. The enzyme catalyses D-maltose(out) + ATP + H2O = D-maltose(in) + ADP + phosphate + H(+). Functionally, part of the ABC transporter complex MalEFGK involved in maltose/maltodextrin import. Responsible for energy coupling to the transport system. This is Maltose/maltodextrin import ATP-binding protein MalK from Mannheimia succiniciproducens (strain KCTC 0769BP / MBEL55E).